The following is a 751-amino-acid chain: FAD-dependent monooxygenase atnA (751 aa).

A helical membrane pass occupies residues 8-28 (LIVGGGVAGLSLAIMLEAYGF). E34, G48, and R109 together coordinate FAD. Residue Y218 is part of the active site. Residues D311 and A324 each contribute to the FAD site. The next 8 membrane-spanning stretches (helical) occupy residues 446 to 466 (PLAT…PWSV), 481 to 501 (SEVF…LWVI), 508 to 528 (LLIS…YWGW), 563 to 583 (ALLP…ALAS), 590 to 610 (DWWP…STFL), 639 to 659 (IAVV…AALL), 663 to 683 (IISL…ALIV), and 706 to 726 (AWAV…LAGA).

The protein belongs to the paxM FAD-dependent monooxygenase family. The cofactor is FAD.

The protein resides in the membrane. The protein operates within secondary metabolite biosynthesis; terpenoid biosynthesis. Its function is as follows. FAD-dependent monooxygenase; part of the gene cluster that mediates the biosynthesis of the meroterpenoids arthripenoids. The pathway begins with the HR-PKS atnH that catalyzes two chain-extension steps to form a reduced triketide, which then primes the SAT domain in the NR-PKS atnG to initiate three more cycles of extension to give a linear hexaketide corresponding to the polyketide part of arthripenoids. The FAD-dependent monooxygenase atnJ then performs an oxidative decarboxylation at C11 of the atnH/atnG product, via an electrophilic aromatic hydroxylation with concomitant ipso-decarboxylation. The membrane-bound polyprenyl transferase atnF then introduces a farnesyl group before the FAD-dependent monooxygenase atnK functions as the first epoxidase on terminal C12'-C13' olefin, followed by a second epoxidation on C7'-C8' catalyzed by atnA. The terpene cyclase/mutase atnI then initiates the sequential tricyclic ring formation through protonation of the terminal epoxide and catalyzes the regioselective and stereoselective 6/6/6-tricyclic ring formation. The cytochrome P450 monooxygenase atnM is responsible for hydroxylating both C1' and C10'. The next steps may involve ketoreduction and acetyl transfer by the ketoreductase atnB and the acetyltransferase atnC, and lead to the production of arthripenoid B, the final biosynthetic product of the atn cluster. The hydroquinone moiety in arthripenoid B is prone to undergo spontaneous oxidation to afford a benzoquinone compound, a key intermediate for generating structure diversity. For instance, addition of a cysteine followed by ring contraction gives arthripenoid A, tautomerization gives the main product arthripenoid C, addition of a molecular of water or amine affords arthripenoid D or E, respectively, and loss of one water forms arthripenoid F. This Arthrinium sp protein is FAD-dependent monooxygenase atnA.